A 652-amino-acid chain; its full sequence is DNA ligase (652 aa).

Residues 29–33, 78–79, and Glu-107 contribute to the NAD(+) site; these read DSEYD and SL. Lys-109 acts as the N6-AMP-lysine intermediate in catalysis. NAD(+) contacts are provided by Arg-130, Glu-164, Lys-278, and Lys-302. Positions 395, 398, 413, and 418 each coordinate Zn(2+). Residues 577–652 form the BRCT domain; that stretch reads AADAVLSGKT…IQDEAWLEQL (76 aa).

Belongs to the NAD-dependent DNA ligase family. LigA subfamily. Mg(2+) is required as a cofactor. The cofactor is Mn(2+).

It catalyses the reaction NAD(+) + (deoxyribonucleotide)n-3'-hydroxyl + 5'-phospho-(deoxyribonucleotide)m = (deoxyribonucleotide)n+m + AMP + beta-nicotinamide D-nucleotide.. DNA ligase that catalyzes the formation of phosphodiester linkages between 5'-phosphoryl and 3'-hydroxyl groups in double-stranded DNA using NAD as a coenzyme and as the energy source for the reaction. It is essential for DNA replication and repair of damaged DNA. The polypeptide is DNA ligase (Streptococcus gordonii (strain Challis / ATCC 35105 / BCRC 15272 / CH1 / DL1 / V288)).